Consider the following 461-residue polypeptide: D-phenylhydantoinase (461 aa).

Positions 59, 61, and 151 each coordinate a divalent metal cation. Lys-151 carries the N6-carboxylysine modification. Tyr-156 serves as a coordination point for substrate. Residues His-182 and His-239 each coordinate a divalent metal cation. Ser-286 is a substrate binding site. Asp-313 contacts a divalent metal cation. A substrate-binding site is contributed by Asn-335.

This sequence belongs to the metallo-dependent hydrolases superfamily. Hydantoinase/dihydropyrimidinase family. As to quaternary structure, homotetramer. A divalent metal cation serves as cofactor. Post-translationally, carboxylation allows a single lysine to coordinate two divalent metal cations.

The enzyme catalyses D-5-phenylhydantoin + H2O = N-carbamoyl-D-phenylglycine + H(+). In terms of biological role, catalyzes the stereospecific hydrolysis of the cyclic amide bond of D-hydantoin derivatives with an aromatic side chains at the 5'-position. Has no activity on dihydropyrimidines. The physiological function is unknown. This chain is D-phenylhydantoinase, found in Escherichia coli O9:H4 (strain HS).